We begin with the raw amino-acid sequence, 215 residues long: Large ribosomal subunit protein uL16 (215 aa).

The tract at residues 1–22 (MGRRPARCYRQPKGKPYPKSRY) is disordered.

Belongs to the universal ribosomal protein uL16 family.

This Tetrahymena thermophila (strain SB210) protein is Large ribosomal subunit protein uL16 (RPL10).